Consider the following 611-residue polypeptide: Pyrichalasin H cluster regulator pyiR (611 aa).

A DNA-binding region (zn(2)-C6 fungal-type) is located at residues 11 to 47; that stretch reads CDRCRGHKLRCIRLDPGPNDTGALLPCKRCVKAGAEC. Disordered regions lie at residues 53-128, 169-192, 265-291, 401-427, 521-550, and 564-593; these read LSVK…LPPW, ALAA…DGTT, GGAG…GRSS, AHEG…AAPQ, RGGL…SDER, and SWFT…RTVE. Residues 59-69 show a composition bias toward basic and acidic residues; sequence GDGHHSAHRAT. Residues 98-109 show a composition bias toward low complexity; the sequence is PTQPAPQRQTQR. Residues 265 to 279 are compositionally biased toward polar residues; that stretch reads GGAGSQSLRDQQMQQ. The segment covering 572 to 587 has biased composition (gly residues); the sequence is GGSGGSGPGEGTGDSN.

It localises to the nucleus. Transcription factor that specifically regulates the expression of the gene cluster that mediates the biosynthesis of the mycotoxin pyrichalasin H, a tyrosine-derived cytochalasan that inhibits the growth of rice seedlings, but also inhibits lymphocyte capping and actin polymerization and alters cell morphology. Pyrichalasin H is indicated as the responsible agent for the genus-specific pathogenicity of M.grisea toward crabgrass. This Pyricularia grisea (Crabgrass-specific blast fungus) protein is Pyrichalasin H cluster regulator pyiR.